Reading from the N-terminus, the 238-residue chain is Endothelial protein C receptor (238 aa).

The N-terminal stretch at 1-17 (MLTTLLPILLLSGWAFC) is a signal peptide. At 18–210 (SQDASDGLQR…GSQTSRSYTS (193 aa)) the chain is on the extracellular side. Asn-47, Asn-64, Asn-136, and Asn-172 each carry an N-linked (GlcNAc...) asparagine glycan. A disulfide bond links Cys-118 and Cys-186. Residues 211–231 (LVLGVLVGSFIIAGVAVGIFL) traverse the membrane as a helical segment. Over 232-238 (CTGGRRC) the chain is Cytoplasmic.

Post-translationally, N-glycosylated. A soluble form exists; probably released by a metalloprotease. Seems to have the same activity as the membrane-bound form. In terms of tissue distribution, expressed strongly in the endothelial cells of arteries and veins in heart and lung, less intensely in capillaries in the lung and skin, and not at all in the endothelium of small vessels of the liver and kidney.

Its subcellular location is the membrane. Its function is as follows. Binds activated protein C. Enhances protein C activation by the thrombin-thrombomodulin complex; plays a role in the protein C pathway controlling blood coagulation. The protein is Endothelial protein C receptor (PROCR) of Homo sapiens (Human).